The chain runs to 986 residues: Bifunctional glutamine synthetase adenylyltransferase/adenylyl-removing enzyme (986 aa).

An adenylyl removase region spans residues 1 to 473 (MTSSAPGNAD…HYARLFEGDP (473 aa)). Positions 478–986 (SLPPVNYGAG…RRVFTALLER (509 aa)) are adenylyl transferase.

It belongs to the GlnE family. Requires Mg(2+) as cofactor.

The catalysed reaction is [glutamine synthetase]-O(4)-(5'-adenylyl)-L-tyrosine + phosphate = [glutamine synthetase]-L-tyrosine + ADP. It catalyses the reaction [glutamine synthetase]-L-tyrosine + ATP = [glutamine synthetase]-O(4)-(5'-adenylyl)-L-tyrosine + diphosphate. Functionally, involved in the regulation of glutamine synthetase GlnA, a key enzyme in the process to assimilate ammonia. When cellular nitrogen levels are high, the C-terminal adenylyl transferase (AT) inactivates GlnA by covalent transfer of an adenylyl group from ATP to specific tyrosine residue of GlnA, thus reducing its activity. Conversely, when nitrogen levels are low, the N-terminal adenylyl removase (AR) activates GlnA by removing the adenylyl group by phosphorolysis, increasing its activity. The regulatory region of GlnE binds the signal transduction protein PII (GlnB) which indicates the nitrogen status of the cell. The protein is Bifunctional glutamine synthetase adenylyltransferase/adenylyl-removing enzyme of Bradyrhizobium sp. (strain ORS 278).